The chain runs to 444 residues: Na(+)/H(+) antiporter NhaA 2 (444 aa).

The next 11 membrane-spanning stretches (helical) occupy residues 21-41, 64-84, 102-122, 131-151, 160-180, 185-205, 212-232, 307-327, 342-362, 377-397, and 413-433; these read FSGI…NSPF, FSIH…MVGL, AFPV…YYVL, GFGI…LLLG, VFLV…IAVF, EGLH…LTGI, HLGV…HSGI, ALQP…NAGV, LGVI…LTFL, WSHI…SMFV, and IAIL…LIIN.

Belongs to the NhaA Na(+)/H(+) (TC 2.A.33) antiporter family.

The protein localises to the cell inner membrane. It carries out the reaction Na(+)(in) + 2 H(+)(out) = Na(+)(out) + 2 H(+)(in). In terms of biological role, na(+)/H(+) antiporter that extrudes sodium in exchange for external protons. In Helicobacter hepaticus (strain ATCC 51449 / 3B1), this protein is Na(+)/H(+) antiporter NhaA 2.